The chain runs to 1184 residues: MRKKQKLPFDKLAIALMSTSILLNAQSDIKANTVTEDTPATEQAVETPQPTAVSEEAPSSKETKTPQTPDDAEETVADKANDLAPQAPAKTTDTPATSKATIRDLNDPSQVKTLQEKAGKGAGTVVAVIDAGFDKNHEAWRLTDKTKARYQSKEDLEKAKKEHGITYGEWVNDKIAYYHDYSKDGKTAVDQEHGTHVSGILSGNAPSETKEPYRLEGAMPEAQLLLMRVEIVNGLADYARNYAQAIRDAVNLGAKVINMSFGNAALAYANLPDETKKAFDYAKSKGVSIVTSAGNDSSFGGKTRLPLADHPDYGVVGTPAAADSTLTVASYSPDKQLTETATVKTADQQDKEMPVLSTNRFEPNKAYDYAYANRGMKEDDFKDVKGKIALIERGDIDFKDKIANAKKAGAVGVLIYDNQDKGFPIELPNVDQMPAAFISRKDGLLLKENPQKTITFNATPKVLPTASGTKLSRFSSWGLTADGNIKPDIAAPGQDILSSVANNKYAKLSGTSMSAPLVAGIMGLLQKQYETQYPDMTPSERLDLAKKVLMSSATALYDEDEKAYFSPRQQGAGAVDAKKASAATMYVTDKDNTSSKVHLNNVSDTFEVTVTVHNKSDKPQELYYQATVQTDKVDGKHFALAPKALYETSWQKITIPANSSKQVTVPIDASRFSKDLLAQMKNGYFLEGFVRFKQDLTKEELMSIPYIGFRGDFGNLSALEKPIYDSKDGSSYYHEANSDAKDQLDGDGLQFYALKNNFTALTTESNPWMIIKAVKEGVENIEDIESSEITETIFAGTFAKQDDDSHYYIHRHANGKPYAAISPNGDGNRDYVQFQGTFLRNAKNLVAEVLDKEGNVVWTSEVTEQVVKNYNNDLASTLGSTRFEKTRWDGKDKDGKVVANGTYTYRVRYTPISSGAKEQHTDFDVIVDNTTPEVATSATFSTEDRRLTLASKPKTSQPVYRERIAYTYMDEDLPTTEYISPNEDGTFTLPEEAETMEGGTVPLKMSDFTYVVEDMAGNITYTPVTKLLEGHSNKPEQDGSDQVPDKKPETKPEQDGSGQAPDKKPETKPEQDGSGQAPDKKPEAKPEQDGSGQTPDKKPETKPEKDSSGQTPGKTPQKGQPSRTLEKRSSKRALATKASARDQLPTTNDKDTNRLHLLKLVMTTFFFGLVAHIFKTKRQKETKK.

A signal peptide spans 1-31; sequence MRKKQKLPFDKLAIALMSTSILLNAQSDIKA. 2 stretches are compositionally biased toward polar residues: residues 33–52 and 89–100; these read TVTE…QPTA and AKTTDTPATSKA. A disordered region spans residues 33–117; that stretch reads TVTEDTPATE…PSQVKTLQEK (85 aa). The 483-residue stretch at 99–581 folds into the Peptidase S8 domain; the sequence is KATIRDLNDP…AGAVDAKKAS (483 aa). Active-site charge relay system residues include Asp130, His193, and Ser512. Basic and acidic residues-rich tracts occupy residues 1029–1054, 1061–1071, 1078–1088, and 1095–1107; these read EGHS…KPEQ, PDKKPETKPEQ, PDKKPEAKPEQ, and PDKK…EKDS. A disordered region spans residues 1029–1150; the sequence is EGHSNKPEQD…RDQLPTTNDK (122 aa). 4 repeat units span residues 1034-1067, 1068-1084, 1085-1101, and 1102-1118. The segment at 1034–1118 is 4 X 17 AA tandem repeats; that stretch reads KPEQDGSDQV…GQTPGKTPQK (85 aa). Polar residues predominate over residues 1109-1123; that stretch reads GQTPGKTPQKGQPSR. Positions 1144 to 1148 match the LPXTG sorting signal motif; the sequence is LPTTN. Residue Thr1147 is modified to Pentaglycyl murein peptidoglycan amidated threonine. Residues 1148–1184 constitute a propeptide, removed by sortase; the sequence is NDKDTNRLHLLKLVMTTFFFGLVAHIFKTKRQKETKK.

Belongs to the peptidase S8 family. Cleaved by SpeB protease; leading to its degradation. Degradation by SpeB is probably strictly regulated to preserve integrity of C5a peptidase.

It localises to the secreted. Its subcellular location is the cell wall. The enzyme catalyses The primary cleavage site is at 67-His-|-Lys-68 in human C5a with a minor secondary cleavage site at 58-Ala-|-Ser-59.. Functionally, this virulence factor of S.pyogenes specifically cleaves the human serum chemotaxin C5a at '68-Lys-|-Asp-69' bond near its C-terminus, destroying its ability to serve as a chemoattractant. This chain is C5a peptidase (scpA), found in Streptococcus pyogenes serotype M6 (strain ATCC BAA-946 / MGAS10394).